Consider the following 357-residue polypeptide: Sulfate/thiosulfate import ATP-binding protein CysA (357 aa).

Residues 3–237 form the ABC transporter domain; it reads IVIQNVSKSF…PKSPFVYDFL (235 aa). Residue 35–42 participates in ATP binding; that stretch reads GPSGSGKT.

The protein belongs to the ABC transporter superfamily. Sulfate/tungstate importer (TC 3.A.1.6) family. The complex is composed of two ATP-binding proteins (CysA), two transmembrane proteins (CysT and CysW) and a solute-binding protein (CysP).

The protein localises to the cell membrane. The catalysed reaction is sulfate(out) + ATP + H2O = sulfate(in) + ADP + phosphate + H(+). It catalyses the reaction thiosulfate(out) + ATP + H2O = thiosulfate(in) + ADP + phosphate + H(+). Part of the ABC transporter complex CysAWTP involved in sulfate/thiosulfate import. Responsible for energy coupling to the transport system. In Halalkalibacterium halodurans (strain ATCC BAA-125 / DSM 18197 / FERM 7344 / JCM 9153 / C-125) (Bacillus halodurans), this protein is Sulfate/thiosulfate import ATP-binding protein CysA.